Consider the following 264-residue polypeptide: Glutamate racemase (264 aa).

Substrate is bound by residues 10-11 (DS) and 42-43 (YG). Cysteine 73 (proton donor/acceptor) is an active-site residue. 74–75 (NT) lines the substrate pocket. Cysteine 183 (proton donor/acceptor) is an active-site residue. 184 to 185 (TH) is a substrate binding site.

Belongs to the aspartate/glutamate racemases family.

The catalysed reaction is L-glutamate = D-glutamate. The protein operates within cell wall biogenesis; peptidoglycan biosynthesis. In terms of biological role, provides the (R)-glutamate required for cell wall biosynthesis. The protein is Glutamate racemase of Streptococcus pyogenes serotype M49 (strain NZ131).